The chain runs to 105 residues: Large ribosomal subunit protein uL24 (105 aa).

Belongs to the universal ribosomal protein uL24 family. As to quaternary structure, part of the 50S ribosomal subunit.

One of two assembly initiator proteins, it binds directly to the 5'-end of the 23S rRNA, where it nucleates assembly of the 50S subunit. In terms of biological role, one of the proteins that surrounds the polypeptide exit tunnel on the outside of the subunit. In Aromatoleum aromaticum (strain DSM 19018 / LMG 30748 / EbN1) (Azoarcus sp. (strain EbN1)), this protein is Large ribosomal subunit protein uL24.